A 124-amino-acid polypeptide reads, in one-letter code: MAVSSAVRMLSVACLVVSAAGMRRLGDCSSSADCGPGACCTIGFNRYSIPQCTPLGDLGDWCRVMNPPRELSLAYPNGLQVLLTDSYHGMCPCRPELACSRATSTCQLPQESTQHQEDNSLYKD.

The signal sequence occupies residues 1-21 (MAVSSAVRMLSVACLVVSAAG). 5 disulfides stabilise this stretch: Cys-28-Cys-40, Cys-34-Cys-52, Cys-39-Cys-91, Cys-62-Cys-99, and Cys-93-Cys-106.

Belongs to the AVIT (prokineticin) family.

Its subcellular location is the secreted. Its function is as follows. Cytokine directly involved in hematopoiesis. This is Astakine from Penaeus monodon (Giant tiger prawn).